The primary structure comprises 164 residues: tRNA (cytidine(34)-2'-O)-methyltransferase (164 aa).

Residues Met80, Gly102, Val124, and Ser132 each coordinate S-adenosyl-L-methionine.

It belongs to the class IV-like SAM-binding methyltransferase superfamily. RNA methyltransferase TrmH family. TrmL subfamily. As to quaternary structure, homodimer.

Its subcellular location is the cytoplasm. It carries out the reaction cytidine(34) in tRNA + S-adenosyl-L-methionine = 2'-O-methylcytidine(34) in tRNA + S-adenosyl-L-homocysteine + H(+). The enzyme catalyses 5-carboxymethylaminomethyluridine(34) in tRNA(Leu) + S-adenosyl-L-methionine = 5-carboxymethylaminomethyl-2'-O-methyluridine(34) in tRNA(Leu) + S-adenosyl-L-homocysteine + H(+). In terms of biological role, methylates the ribose at the nucleotide 34 wobble position in the two leucyl isoacceptors tRNA(Leu)(CmAA) and tRNA(Leu)(cmnm5UmAA). Catalyzes the methyl transfer from S-adenosyl-L-methionine to the 2'-OH of the wobble nucleotide. The protein is tRNA (cytidine(34)-2'-O)-methyltransferase of Polaromonas sp. (strain JS666 / ATCC BAA-500).